A 562-amino-acid polypeptide reads, in one-letter code: Bacillolysin (562 aa).

Residues 1 to 24 (MKKKKQALKVLLSVGILSSSFAFA) form the signal peptide. The propeptide at 25-245 (HTSSAAPNNV…KQAAKPAAKP (221 aa)) is activation peptide. 3 residues coordinate Ca(2+): D303, D305, and D384. H388 serves as a coordination point for Zn(2+). The active site involves E389. Residues H392 and E412 each contribute to the Zn(2+) site. Ca(2+) is bound by residues E423, N429, D431, E433, E436, Y439, T440, and D446. Catalysis depends on H477, which acts as the Proton donor.

Belongs to the peptidase M4 family. Requires Ca(2+) as cofactor. Zn(2+) serves as cofactor.

It is found in the secreted. It catalyses the reaction Similar, but not identical, to that of thermolysin.. Extracellular zinc metalloprotease. The sequence is that of Bacillolysin from Priestia megaterium (strain ATCC 14581 / DSM 32 / CCUG 1817 / JCM 2506 / NBRC 15308 / NCIMB 9376 / NCTC 10342 / NRRL B-14308 / VKM B-512 / Ford 19) (Bacillus megaterium).